Consider the following 631-residue polypeptide: Dolichyl-diphosphooligosaccharide--protein glycosyltransferase subunit 2 (631 aa).

An N-terminal signal peptide occupies residues 1 to 22; it reads MAPPGSSAVFLLALTITASTQA. At 23-540 the chain is on the lumenal side; that stretch reads LTPTHYLTKH…REPEKRPPTV (518 aa). Asn-106 carries an N-linked (GlcNAc...) asparagine glycan. A Glycyl lysine isopeptide (Lys-Gly) (interchain with G-Cter in ubiquitin) cross-link involves residue Lys-154. The chain crosses the membrane as a helical span at residues 541–561; that stretch reads VSNTFTALILSPLLLLFALWI. Residues 562–571 lie on the Cytoplasmic side of the membrane; sequence RIGANVSNFT. Residues 572 to 592 traverse the membrane as a helical segment; that stretch reads FAPSTVIFHLGHAAMLGLMYV. Over 593-596 the chain is Lumenal; that stretch reads YWTQ. Residues 597-617 form a helical membrane-spanning segment; sequence LNMFQTLKYLAVLGTVTFLAG. At 618-631 the chain is on the cytoplasmic side; it reads NRMLAQQAVKRTAH.

Belongs to the SWP1 family. Component of the oligosaccharyltransferase (OST) complex. OST exists in two different complex forms which contain common core subunits RPN1, RPN2, OST48, OST4, DAD1 and TMEM258, either STT3A or STT3B as catalytic subunits, and form-specific accessory subunits. STT3A complex assembly occurs through the formation of 3 subcomplexes. Subcomplex 1 contains RPN1 and TMEM258, subcomplex 2 contains the STT3A-specific subunits STT3A, DC2/OSTC, and KCP2 as well as the core subunit OST4, and subcomplex 3 contains RPN2, DAD1, and OST48. The STT3A complex can form stable complexes with the Sec61 complex or with both the Sec61 and TRAP complexes. Interacts with DDI2. Interacts with TMEM35A/NACHO.

It is found in the endoplasmic reticulum. Its subcellular location is the endoplasmic reticulum membrane. It participates in protein modification; protein glycosylation. Functionally, subunit of the oligosaccharyl transferase (OST) complex that catalyzes the initial transfer of a defined glycan (Glc(3)Man(9)GlcNAc(2) in eukaryotes) from the lipid carrier dolichol-pyrophosphate to an asparagine residue within an Asn-X-Ser/Thr consensus motif in nascent polypeptide chains, the first step in protein N-glycosylation. N-glycosylation occurs cotranslationally and the complex associates with the Sec61 complex at the channel-forming translocon complex that mediates protein translocation across the endoplasmic reticulum (ER). All subunits are required for a maximal enzyme activity. This is Dolichyl-diphosphooligosaccharide--protein glycosyltransferase subunit 2 from Rattus norvegicus (Rat).